The chain runs to 285 residues: Dihydropteroate synthase (285 aa).

One can recognise a Pterin-binding domain in the interval 25–271 (TLVMGILNVT…DVKQIARMAK (247 aa)). Mg(2+) is bound at residue N32. (7,8-dihydropterin-6-yl)methyl diphosphate-binding positions include T72, D106, N125, D189, K225, and 259 to 261 (RVH).

This sequence belongs to the DHPS family. Mg(2+) serves as cofactor.

The catalysed reaction is (7,8-dihydropterin-6-yl)methyl diphosphate + 4-aminobenzoate = 7,8-dihydropteroate + diphosphate. It participates in cofactor biosynthesis; tetrahydrofolate biosynthesis; 7,8-dihydrofolate from 2-amino-4-hydroxy-6-hydroxymethyl-7,8-dihydropteridine diphosphate and 4-aminobenzoate: step 1/2. Functionally, catalyzes the condensation of para-aminobenzoate (pABA) with 6-hydroxymethyl-7,8-dihydropterin diphosphate (DHPt-PP) to form 7,8-dihydropteroate (H2Pte), the immediate precursor of folate derivatives. In Bacillus subtilis (strain 168), this protein is Dihydropteroate synthase (sul).